We begin with the raw amino-acid sequence, 337 residues long: Ornithine carbamoyltransferase, catabolic (337 aa).

Carbamoyl phosphate is bound by residues 57 to 60 (STRT), Gln-84, Arg-108, and 135 to 138 (HPTQ). Residues Asn-167, Asp-231, and 235 to 236 (SM) contribute to the L-ornithine site. Carbamoyl phosphate contacts are provided by residues 272 to 273 (CL) and Arg-317.

The protein belongs to the aspartate/ornithine carbamoyltransferase superfamily. OTCase family.

The protein localises to the cytoplasm. The enzyme catalyses carbamoyl phosphate + L-ornithine = L-citrulline + phosphate + H(+). It participates in amino-acid degradation; L-arginine degradation via ADI pathway; carbamoyl phosphate from L-arginine: step 2/2. Its function is as follows. Reversibly catalyzes the transfer of the carbamoyl group from carbamoyl phosphate (CP) to the N(epsilon) atom of ornithine (ORN) to produce L-citrulline. This chain is Ornithine carbamoyltransferase, catabolic (arcB), found in Streptococcus agalactiae.